Consider the following 323-residue polypeptide: Beta-ketoacyl-[acyl-carrier-protein] synthase III (323 aa).

Residues Cys-113 and His-250 contribute to the active site. Positions 251 to 255 (QANKR) are ACP-binding. The active site involves Asn-280.

This sequence belongs to the thiolase-like superfamily. FabH family. In terms of assembly, homodimer.

Its subcellular location is the cytoplasm. The enzyme catalyses malonyl-[ACP] + acetyl-CoA + H(+) = 3-oxobutanoyl-[ACP] + CO2 + CoA. It participates in lipid metabolism; fatty acid biosynthesis. Functionally, catalyzes the condensation reaction of fatty acid synthesis by the addition to an acyl acceptor of two carbons from malonyl-ACP. Catalyzes the first condensation reaction which initiates fatty acid synthesis and may therefore play a role in governing the total rate of fatty acid production. Possesses both acetoacetyl-ACP synthase and acetyl transacylase activities. Its substrate specificity determines the biosynthesis of branched-chain and/or straight-chain of fatty acids. In Brucella canis (strain ATCC 23365 / NCTC 10854 / RM-666), this protein is Beta-ketoacyl-[acyl-carrier-protein] synthase III.